A 338-amino-acid polypeptide reads, in one-letter code: uncharacterized protein (338 aa).

Residues 1–29 form the signal peptide; sequence MIKQLYKNITICSLTISTALTVFPATSYA.

It belongs to the aerolysin family.

This is an uncharacterized protein from Staphylococcus aureus (strain bovine RF122 / ET3-1).